The chain runs to 685 residues: Methionine--tRNA ligase (685 aa).

A 'HIGH' region motif is present at residues 12 to 22 (PYANGSIHLGH). Zn(2+)-binding residues include C143, C146, C156, and C159. The 'KMSKS' region motif lies at 339 to 343 (KMSKS). An ATP-binding site is contributed by K342. Residues 582 to 685 (DFMKIDMRVA…AGAQPGDKVG (104 aa)) enclose the tRNA-binding domain.

It belongs to the class-I aminoacyl-tRNA synthetase family. MetG type 1 subfamily. Homodimer. It depends on Zn(2+) as a cofactor.

The protein resides in the cytoplasm. It carries out the reaction tRNA(Met) + L-methionine + ATP = L-methionyl-tRNA(Met) + AMP + diphosphate. Is required not only for elongation of protein synthesis but also for the initiation of all mRNA translation through initiator tRNA(fMet) aminoacylation. This chain is Methionine--tRNA ligase, found in Neisseria meningitidis serogroup C (strain 053442).